The primary structure comprises 160 residues: Transcription elongation factor GreB (160 aa).

This sequence belongs to the GreA/GreB family. GreB subfamily.

In terms of biological role, necessary for efficient RNA polymerase transcription elongation past template-encoded arresting sites. The arresting sites in DNA have the property of trapping a certain fraction of elongating RNA polymerases that pass through, resulting in locked ternary complexes. Cleavage of the nascent transcript by cleavage factors such as GreA or GreB allows the resumption of elongation from the new 3'terminus. GreB releases sequences of up to 9 nucleotides in length. This Vibrio vulnificus (strain YJ016) protein is Transcription elongation factor GreB.